The following is a 159-amino-acid chain: Type-1 angiotensin II receptor-associated protein (159 aa).

The Extracellular portion of the chain corresponds to 1 to 23 (MELPAVNLKVILLGHWLLTTWGC). A helical transmembrane segment spans residues 24–44 (IVFSGSYAWANFTILALGVWA). Residues 45-55 (VAQRDSIDAIS) lie on the Cytoplasmic side of the membrane. A helical transmembrane segment spans residues 56 to 76 (MFLGGLLATIFLDIVHISIFY). Topologically, residues 77–86 (PRVSLTDTGR) are extracellular. The helical transmembrane segment at 87 to 107 (FGVGMAILSLLLKPLSCCFVY) threads the bilayer. Residues 108–159 (HMYRERGGELLVHTGFLGSSQDRSAYQTIDSAEAPADPFAVPEGRSQDARGY) lie on the Cytoplasmic side of the membrane. The interval 110 to 122 (YRERGGELLVHTG) is interaction with AGTR1. Phosphoserine occurs at positions 126 and 127. T135 is subject to Phosphothreonine. A phosphoserine mark is found at S138 and S153. Residues 140–159 (EAPADPFAVPEGRSQDARGY) are disordered.

Interacts with RACK1, and with the C-terminal region of AGTR1. In terms of tissue distribution, ubiquitous but more abundant in kidney, heart, pancreas and thyroid.

The protein resides in the endoplasmic reticulum membrane. It is found in the golgi apparatus membrane. It localises to the cytoplasmic vesicle membrane. Appears to be a negative regulator of type-1 angiotensin II receptor-mediated signaling by regulating receptor internalization as well as mechanism of receptor desensitization such as phosphorylation. Also induces a decrease in cell proliferation and angiotensin II-stimulated transcriptional activity. The sequence is that of Type-1 angiotensin II receptor-associated protein (AGTRAP) from Homo sapiens (Human).